Reading from the N-terminus, the 119-residue chain is uncharacterized protein (119 aa).

A run of 2 helical transmembrane segments spans residues 61 to 80 (LISA…LLSV) and 87 to 103 (VVGV…VDII).

The protein resides in the membrane. This is an uncharacterized protein from Saccharomyces cerevisiae (strain ATCC 204508 / S288c) (Baker's yeast).